Reading from the N-terminus, the 432-residue chain is Patatin-like phospholipase domain-containing protein 5 (432 aa).

A PNPLA domain is found at 12–181 (LSFSGSGYMG…SNNLPFSDCP (170 aa)). Positions 16 to 21 (GSGYMG) match the GXGXXG motif. Residues 47-51 (GSSSG) carry the GXSXG motif. Ser49 (nucleophile) is an active-site residue. Asp168 serves as the catalytic Proton acceptor. Positions 168–170 (DGA) match the DGA/G motif. The segment at 404-423 (ADSGLLRQQRGTAPSGNRPL) is disordered.

The enzyme catalyses a triacylglycerol + H2O = a diacylglycerol + a fatty acid + H(+). Its function is as follows. Has abundant triacylglycerol lipase activity. The protein is Patatin-like phospholipase domain-containing protein 5 of Mus musculus (Mouse).